A 121-amino-acid polypeptide reads, in one-letter code: Huntingtin-interacting protein K (121 aa).

Positions 1–13 are enriched in acidic residues; sequence MATEGDVELELET. Residues 1–75 form a disordered region; it reads MATEGDVELE…EQKAKQEREK (75 aa). Basic and acidic residues-rich tracts occupy residues 20-47 and 60-75; these read RPPEKPRKHDSGAADLERVTDYAEEKEI and GDRRSREQKAKQEREK. The residue at position 30 (Ser30) is a Phosphoserine. Positions 52-121 are required for association with the NAA10-NAA15 complex; it reads LETAMSVIGD…VVEALIALTN (70 aa). The stretch at 62 to 107 forms a coiled coil; that stretch reads RRSREQKAKQEREKELAKVTIKKEDLELIMTEMEISRAAAERSLRE.

In terms of assembly, component of the N-terminal acetyltransferase A (NatA)/HYPK complex at least composed of NAA10, NAA15 and HYPK, which has N-terminal acetyltransferase activity. Within the complex interacts with NAA10. Within the complex interacts with NAA15. Predominantly interacts with NAA15 in the NAA10-NAA15 complex (also called the NatA complex); the interaction with the NatA complex reduces the acetylation activity of the NatA complex. Interacts with HTT (via N-terminus). The NatA complex is required for HYPK stability and for reducing polyQ aggregation of HTT. Component of the N-terminal acetyltransferase E (NatE)/HYPK complex at least composed of NAA10, NAA15, NAA50 and HYPK. Within the complex interacts with NAA10 and NAA15. Does not interact with NAA50. Interaction with NAA15 reduces the capacity of NAA15 to interact with NAA50. Its capacity to interact with the NatA complex is reduced by NAA50. Does not interact with the N-terminal acetyltransferase B (NatB) complex component NAA25 or the N-terminal acetyltransferase C (NatC) complex component NAA35.

The protein localises to the nucleus. The protein resides in the cytoplasm. Its function is as follows. Component of several N-terminal acetyltransferase complexes. Inhibits the N-terminal acetylation activity of the N-terminal acetyltransferase NAA10-NAA15 complex (also called the NatA complex). Has chaperone-like activity preventing polyglutamine (polyQ) aggregation of HTT in neuronal cells probably while associated with the NatA complex. May play a role in the NatA complex-mediated N-terminal acetylation of PCNP. The chain is Huntingtin-interacting protein K from Homo sapiens (Human).